The sequence spans 385 residues: D-alanine--D-alanine ligase (385 aa).

The ATP-grasp domain occupies 165-375 (KRVFTSFGLK…YPELVDRLVE (211 aa)). 201–256 (AGEHGWPLFVKPARAGSSIGITKVDDLAGLDEAVAEAQRHDPKIIVEALLRGREIE) provides a ligand contact to ATP. Aspartate 329, glutamate 342, and asparagine 344 together coordinate Mg(2+).

This sequence belongs to the D-alanine--D-alanine ligase family. The cofactor is Mg(2+). Mn(2+) serves as cofactor.

It localises to the cytoplasm. It carries out the reaction 2 D-alanine + ATP = D-alanyl-D-alanine + ADP + phosphate + H(+). The protein operates within cell wall biogenesis; peptidoglycan biosynthesis. Its function is as follows. Cell wall formation. The polypeptide is D-alanine--D-alanine ligase (Streptomyces avermitilis (strain ATCC 31267 / DSM 46492 / JCM 5070 / NBRC 14893 / NCIMB 12804 / NRRL 8165 / MA-4680)).